The chain runs to 263 residues: Acyl-[acyl-carrier-protein]--UDP-N-acetylglucosamine O-acyltransferase (263 aa).

This sequence belongs to the transferase hexapeptide repeat family. LpxA subfamily. In terms of assembly, homotrimer.

The protein resides in the cytoplasm. The catalysed reaction is a (3R)-hydroxyacyl-[ACP] + UDP-N-acetyl-alpha-D-glucosamine = a UDP-3-O-[(3R)-3-hydroxyacyl]-N-acetyl-alpha-D-glucosamine + holo-[ACP]. Its pathway is glycolipid biosynthesis; lipid IV(A) biosynthesis; lipid IV(A) from (3R)-3-hydroxytetradecanoyl-[acyl-carrier-protein] and UDP-N-acetyl-alpha-D-glucosamine: step 1/6. In terms of biological role, involved in the biosynthesis of lipid A, a phosphorylated glycolipid that anchors the lipopolysaccharide to the outer membrane of the cell. The polypeptide is Acyl-[acyl-carrier-protein]--UDP-N-acetylglucosamine O-acyltransferase (Stenotrophomonas maltophilia (strain K279a)).